Reading from the N-terminus, the 457-residue chain is Protein translocase subunit SecY (457 aa).

A run of 10 helical transmembrane segments spans residues Ile-17–Gly-37, Ile-75–Phe-95, Thr-118–Leu-138, Trp-162–Val-182, Ile-195–Phe-215, Ile-230–Ile-250, Val-287–Leu-307, Val-326–Thr-346, Leu-386–Leu-406, and Val-412–Met-432.

It belongs to the SecY/SEC61-alpha family. In terms of assembly, component of the Sec protein translocase complex. Heterotrimer consisting of SecY, SecE and SecG subunits. The heterotrimers can form oligomers, although 1 heterotrimer is thought to be able to translocate proteins. Interacts with the ribosome. Interacts with SecDF, and other proteins may be involved. Interacts with SecA.

Its subcellular location is the cell inner membrane. Functionally, the central subunit of the protein translocation channel SecYEG. Consists of two halves formed by TMs 1-5 and 6-10. These two domains form a lateral gate at the front which open onto the bilayer between TMs 2 and 7, and are clamped together by SecE at the back. The channel is closed by both a pore ring composed of hydrophobic SecY resides and a short helix (helix 2A) on the extracellular side of the membrane which forms a plug. The plug probably moves laterally to allow the channel to open. The ring and the pore may move independently. The chain is Protein translocase subunit SecY from Chlamydia trachomatis serovar D (strain ATCC VR-885 / DSM 19411 / UW-3/Cx).